The sequence spans 193 residues: NADH-quinone oxidoreductase subunit B (193 aa).

Residues cysteine 72, cysteine 73, cysteine 137, and cysteine 167 each coordinate [4Fe-4S] cluster.

It belongs to the complex I 20 kDa subunit family. As to quaternary structure, NDH-1 is composed of 14 different subunits. Subunits NuoB, C, D, E, F, and G constitute the peripheral sector of the complex. Requires [4Fe-4S] cluster as cofactor.

Its subcellular location is the cell inner membrane. The catalysed reaction is a quinone + NADH + 5 H(+)(in) = a quinol + NAD(+) + 4 H(+)(out). In terms of biological role, NDH-1 shuttles electrons from NADH, via FMN and iron-sulfur (Fe-S) centers, to quinones in the respiratory chain. The immediate electron acceptor for the enzyme in this species is believed to be ubiquinone. Couples the redox reaction to proton translocation (for every two electrons transferred, four hydrogen ions are translocated across the cytoplasmic membrane), and thus conserves the redox energy in a proton gradient. The sequence is that of NADH-quinone oxidoreductase subunit B from Rhizobium rhizogenes (strain K84 / ATCC BAA-868) (Agrobacterium radiobacter).